The chain runs to 693 residues: MAREFSLEKTRNIGIMAHVDAGKTTTTERILYYTGKIHKIGETHEGASQMDWMEQEQERGITITSAATTAQWNNHRVNIIDTPGHVDFTIEVQRSLRVLDGAVTVLDSQSGVEPQTETVWRQATEYGVPRIVFANKMDKIGADFLYSVSTLHDRLQANAHPIQLPIGAEDDFRGIIDLIKMKAEIYTNDLGTDILEEDIPAEYLEQAQEYREKLVEAVAETDEDLMMKYLEGEEITNEELKAGIRKATINVEFFPVLCGSAFKNKGVQLMLDAVIDYLPSPLDIPAIKGINPDTDEEETRPASDEEPFAALAFKIMTDPFVGRLTFFRVYSGVLQSGSYVLNTSKGKRERIGRILQMHANSRQEIETVYAGDIAAAVGLKDTTTGDSLTDEKAKIILESINVPEPVIQLMVEPKSKADQDKMGVALQKLAEEDPTFRVETNVETGETVISGMGELHLDVLVDRMRREFKVEANVGAPQVSYRETFRASTQARGFFKRQSGGKGQFGDVWIEFTPNEEGKGFEFENAIVGGVVPREFIPAVEKGLVESMANGVLAGYPIVDVKAKLYDGSYHDVDSSETAFKVAASLALKEAAKTAQPAILEPMMLVTITVPEENLGDVMGHVTARRGRVDGMEAHGNSQIVRAYVPLAEMFGYATVLRSASQGRGTFMMVFDHYEDVPKSVQEEIIKKHKGEA.

The 275-residue stretch at 8-282 (EKTRNIGIMA…AVIDYLPSPL (275 aa)) folds into the tr-type G domain. Residues 17-24 (AHVDAGKT), 81-85 (DTPGH), and 135-138 (NKMD) contribute to the GTP site.

The protein belongs to the TRAFAC class translation factor GTPase superfamily. Classic translation factor GTPase family. EF-G/EF-2 subfamily.

Its subcellular location is the cytoplasm. Catalyzes the GTP-dependent ribosomal translocation step during translation elongation. During this step, the ribosome changes from the pre-translocational (PRE) to the post-translocational (POST) state as the newly formed A-site-bound peptidyl-tRNA and P-site-bound deacylated tRNA move to the P and E sites, respectively. Catalyzes the coordinated movement of the two tRNA molecules, the mRNA and conformational changes in the ribosome. The chain is Elongation factor G from Streptococcus gordonii (strain Challis / ATCC 35105 / BCRC 15272 / CH1 / DL1 / V288).